Here is a 567-residue protein sequence, read N- to C-terminus: Geranylgeranyl transferase type-2 subunit alpha (567 aa).

PFTA repeat units lie at residues 44 to 78, 88 to 122, 124 to 158, 159 to 193, 207 to 241, and 363 to 397; these read LDES…QLET, LVKA…RLPE, NWAR…QAAV, APAE…QLHP, VLLR…RAEP, and VLQS…ALDP. Ser98 carries the post-translational modification Phosphoserine. LRR repeat units lie at residues 442–463, 464–486, 487–508, 509–530, and 534–555; these read DVRV…EQLL, LVTH…AALR, CLEV…ANLP, RLRE…QTLA, and RLVF…RERL.

The protein belongs to the protein prenyltransferase subunit alpha family. Heterotrimer composed of RABGGTA, RABGGTB and CHM; within this trimer, RABGGTA and RABGGTB form the catalytic component B, while CHM (component A) mediates peptide substrate binding. The Rab GGTase dimer (RGGT) interacts with CHM (component A) prior to Rab protein binding; the association is stabilized by geranylgeranyl pyrophosphate (GGpp). The CHM:RGGT:Rab complex is destabilized by GGpp. Interacts with non-phosphorylated form of RAB8A; phosphorylation of RAB8A at 'Thr-72' disrupts this interaction.

The catalysed reaction is geranylgeranyl diphosphate + L-cysteinyl-[protein] = S-geranylgeranyl-L-cysteinyl-[protein] + diphosphate. Its activity is regulated as follows. The enzymatic reaction requires the aid of a Rab escort protein (also called component A), such as CHM. Functionally, catalyzes the transfer of a geranylgeranyl moiety from geranylgeranyl diphosphate to both cysteines of Rab proteins with the C-terminal sequence -XXCC, -XCXC and -CCXX, such as RAB1A, RAB3A, RAB5A and RAB7A. This Mus musculus (Mouse) protein is Geranylgeranyl transferase type-2 subunit alpha (Rabggta).